The following is a 393-amino-acid chain: S-adenosylmethionine synthase (393 aa).

Residue His-17 coordinates ATP. Asp-19 contributes to the Mg(2+) binding site. A K(+)-binding site is contributed by Glu-45. L-methionine is bound by residues Glu-58 and Gln-104. The interval 104-114 (QSAEIAQGVEE) is flexible loop. Residues 171-173 (DAK), Asp-245, 251-252 (RK), Ala-268, and Lys-272 contribute to the ATP site. Asp-245 is an L-methionine binding site. An L-methionine-binding site is contributed by Lys-276.

The protein belongs to the AdoMet synthase family. Homotetramer; dimer of dimers. Requires Mg(2+) as cofactor. K(+) serves as cofactor.

The protein localises to the cytoplasm. It catalyses the reaction L-methionine + ATP + H2O = S-adenosyl-L-methionine + phosphate + diphosphate. Its pathway is amino-acid biosynthesis; S-adenosyl-L-methionine biosynthesis; S-adenosyl-L-methionine from L-methionine: step 1/1. In terms of biological role, catalyzes the formation of S-adenosylmethionine (AdoMet) from methionine and ATP. The overall synthetic reaction is composed of two sequential steps, AdoMet formation and the subsequent tripolyphosphate hydrolysis which occurs prior to release of AdoMet from the enzyme. The chain is S-adenosylmethionine synthase from Hyphomonas neptunium (strain ATCC 15444).